The following is a 687-amino-acid chain: Translation initiation factor IF-2 (687 aa).

The 170-residue stretch at 186 to 355 (KRPPIVTVMG…LLTAEMLELK (170 aa)) folds into the tr-type G domain. The interval 195–202 (GHVDHGKT) is G1. 195 to 202 (GHVDHGKT) is a binding site for GTP. A G2 region spans residues 220-224 (GITQH). Positions 241–244 (DTPG) are G3. GTP-binding positions include 241–245 (DTPGH) and 295–298 (NKID). A G4 region spans residues 295–298 (NKID). Positions 331 to 333 (SAK) are G5.

The protein belongs to the TRAFAC class translation factor GTPase superfamily. Classic translation factor GTPase family. IF-2 subfamily.

The protein localises to the cytoplasm. In terms of biological role, one of the essential components for the initiation of protein synthesis. Protects formylmethionyl-tRNA from spontaneous hydrolysis and promotes its binding to the 30S ribosomal subunits. Also involved in the hydrolysis of GTP during the formation of the 70S ribosomal complex. The protein is Translation initiation factor IF-2 of Clostridium botulinum (strain Eklund 17B / Type B).